Consider the following 748-residue polypeptide: MELQRAQRNLKFLQNEDYVNVTDQTNLNGESQNAYSLGMETQVPEMQFSLSSDDDSISTQVKSVTAQKSPITQETTKNDTERNKDVDKSCNPVSTSQPDLGESNIEENIFINTQIQSRLDDAEEETNLKLKLEKFKYSFKSSNADDTHSNANVTAKRRPAIRKANSKLKTKPKTKRDPKIIKNITDFNINNYERSRTASLLKQLSGKHKKVLDIIKTQNEGNSDKPPRARNNKGEKATFDTYSEQEWKDIMKLLLQKFPQSEETDLNEVQKFLYGSEKSSSSLDNQESSQQRLWTASQLPPELPDEAIQPEQEERIRDTQSAVNFLSLSQVMDDKSEIMKDEESIIISRGDSTSSQEYGNGLEPQQPVGNVVGEDIELAVGTRINAFSLTDYKACKPMSVEVSRRCENSTDNDYDNISIVSDTTDETSTLFPLDQYRYVFIENDERPPLATDTIGSTQFFTPNTSPLDGIIDLTQESFKAVRSLISPLKVENNKTGVTSQASNQVQVPATRTPTIIPQKNLTTTLKTEEEKNNIGSSIRVKLLQESVVKLNPKLVKHNFYRVEANDSEEEDTEFDDQFCIADIQLVDSSKISTKDSTQNPTTSNDIIDTSAASSIASPEKFCEIMMSQSMKELRQSLKTVGLKPMRTKVEIIQSLQTASQILSTANPDNKGEHGGVANFSKIEIFDHLTELIEAFPDFLERIYTFEPIPLNELIEKLFSAEPFVSQIDEMTIREWADVQGICLRNDKK.

The disordered stretch occupies residues Leu-50–Glu-102. The segment covering Ile-57–Thr-75 has biased composition (polar residues). Thr-72 is subject to Phosphothreonine; by ATR and ATM. A compositionally biased stretch (basic and acidic residues) spans Thr-76–Lys-88. At Thr-113 the chain carries Phosphothreonine; by ATR and ATM. 2 disordered regions span residues Ile-215–Lys-236 and Glu-277–Leu-303. Residues Asn-222–Lys-236 are compositionally biased toward basic and acidic residues. Residues Glu-277–Gln-291 are compositionally biased toward low complexity. The residue at position 289 (Ser-289) is a Phosphoserine; by ATR and ATM. A Phosphothreonine; by ATR and ATM modification is found at Thr-319. Phosphoserine; by ATR and ATM is present on residues Ser-329 and Ser-355.

Belongs to the SLX4 family. Forms a heterodimer with SLX1. Interacts with RAD1; catalytic subunit of the RAD1-RAD10 endonuclease. Interacts with RTT107. Post-translationally, phosphorylated by ATR (MEC1) and ATM (TEL1) upon DNA damage. This appears to be required for the function with the RAD1-RAD10 endonuclease.

Its subcellular location is the nucleus. The protein localises to the cytoplasm. Its function is as follows. Regulatory subunit that interacts with and increases the activity of different structure-specific endonucleases. Has several distinct roles in protecting genome stability by resolving diverse forms of deleterious DNA structures. Component of the SLX1-SLX4 structure-specific endonuclease that resolves DNA secondary structures generated during DNA repair and recombination. Has endonuclease activity towards branched DNA substrates, introducing single-strand cuts in duplex DNA close to junctions with ss-DNA. Has a preference for simple Y, 5'-flap and replication fork-like structures. It cleaves the strand bearing the 5'-non-homologous arm at the branch site junction and generates ligatable, nicked products from the 5'-flap or replication fork substrates. Plays a critical role in maintaining the integrity of the ribosomal DNA (rDNA) loci, where it has a role in re-starting stalled replication forks. Has Holliday junction resolvase activity in vitro. Interacts with the structure-specific RAD1-RAD10 endonuclease and promotes RAD1-RAD10-dependent 3'-non-homologous tail removal (NHTR) during repair of double-strand breaks by single-strand annealing. SLX4 also promotes recovery from DNA-alkylation-induced replisome stalling during DNA replication by facilitating the error-free mode of lesion bypass. This does not require SLX1 or RAD1-RAD10, but probably RTT107. The protein is Structure-specific endonuclease subunit SLX4 of Saccharomyces cerevisiae (strain YJM789) (Baker's yeast).